The primary structure comprises 205 residues: Probable GTP-binding protein EngB (205 aa).

Residues 29 to 203 enclose the EngB-type G domain; the sequence is QGAEIAFIGR…KAVLSQWFSS (175 aa). GTP is bound by residues 37–44, 64–68, 82–85, 149–152, and 182–184; these read GRSNAGKS, GRTQM, DLPG, TKSD, and FSS. Positions 44 and 66 each coordinate Mg(2+).

The protein belongs to the TRAFAC class TrmE-Era-EngA-EngB-Septin-like GTPase superfamily. EngB GTPase family. The cofactor is Mg(2+).

Its function is as follows. Necessary for normal cell division and for the maintenance of normal septation. The protein is Probable GTP-binding protein EngB of Coxiella burnetii (strain CbuK_Q154) (Coxiella burnetii (strain Q154)).